Consider the following 474-residue polypeptide: Alkylcitrate dehydratase phiI (474 aa).

It belongs to the PrpD family. In terms of assembly, monomer.

The catalysed reaction is (4E,11E)-2-hydroxytrideca-4,11-dien-1,2,3-tricarboxylate + 2 H(+) = [4-(deca-1,8-diyl)-2,5-dioxo-2,5-dihydro-3-furanyl]acetate + 2 H2O. It functions in the pathway secondary metabolite biosynthesis. In terms of biological role, alkylcitrate dehydratasee; part of the gene cluster that mediates the biosynthesis of the antihypercholesterolemic agents phomoidrides which are dimeric anhydrides. Within the pathway, the alkylcitrate synthase (ACS) tstiJ and the alkylcitrate dehydratase (ACDH) tstI produce the decarboxylated monomeric anhydrides by coupling the C12-fatty acyl product from phiA with oxalacetic acid. The pathway begins with the highly reducing polyketide synthase tstA that catalyzes the formation of a C12-fatty acyl-ACP, starting from one acetate and 5 malonate units. The hydrolase tstM is involved in the release of the C12-fatty acyl chain from phiA. The alkylcitrate synthase (ACS) tstJ and the alkylcitrate dehydratase (ACDH) tstI then give rise to decarboxylated monomeric anhydrides by coupling the C12-fatty acyl chain with oxalacetic acid. The cyclase tstC is responsible for the dimerization of the monomeric anhydrides which leads to the production of prephomoidride that contains the characteristic bicyclo[4.3.1]deca-1,6-diene system of phomoidrides. Iterative oxidation catalyzed by the alpha-ketoglutarate-dependent dioxygenase tstK produced then phomoidride A. Finally, the methyltransferase tstE converts phomoidride A to phomoidride B via an acetalization reaction. The phosphatidylethanolamine-binding protein tstB and tstN are not essential for dimerization and their functions have still to be determined. The chain is Alkylcitrate dehydratase phiI from Talaromyces stipitatus (strain ATCC 10500 / CBS 375.48 / QM 6759 / NRRL 1006) (Penicillium stipitatum).